A 288-amino-acid chain; its full sequence is Oxaloacetate decarboxylase (288 aa).

Serine 47 is a substrate binding site. Aspartate 85 contributes to the Mg(2+) binding site. Residues arginine 156 and histidine 232 each coordinate substrate.

This sequence belongs to the isocitrate lyase/PEP mutase superfamily. Oxaloacetate decarboxylase family. In terms of assembly, homotetramer; dimer of dimers. Mg(2+) is required as a cofactor.

It carries out the reaction oxaloacetate + H(+) = pyruvate + CO2. In terms of biological role, catalyzes the decarboxylation of oxaloacetate into pyruvate. Seems to play a role in maintaining cellular concentrations of bicarbonate and pyruvate. The sequence is that of Oxaloacetate decarboxylase from Rhodopseudomonas palustris (strain BisB18).